Consider the following 525-residue polypeptide: Tigger transposable element-derived protein 2 (525 aa).

The HTH psq-type domain occupies 1-52 (MLGKRKRVVLTIKDKLDIIKKLEEGNSFKKLSVLYGIGESTVRDIKKNKERI). DNA-binding regions (H-T-H motif) lie at residues 28 to 48 (FKKLSVLYGIGESTVRDIKKN) and 100 to 132 (TICAKQARFFFDALGMEGDFNASSGWLTRFKQR). In terms of domain architecture, HTH CENPB-type spans 67-139 (KRKSMKSSTY…KQRHGIPKAA (73 aa)). Positions 168-385 (LLPEQIYGAD…IRSNTITRAW (218 aa)) constitute a DDE-1 domain.

This sequence belongs to the tigger transposable element derived protein family.

Its subcellular location is the nucleus. In Mus musculus (Mouse), this protein is Tigger transposable element-derived protein 2 (Tigd2).